Here is a 180-residue protein sequence, read N- to C-terminus: UPF0227 protein YpsIP31758_1593 (180 aa).

It belongs to the UPF0227 family.

The polypeptide is UPF0227 protein YpsIP31758_1593 (Yersinia pseudotuberculosis serotype O:1b (strain IP 31758)).